A 133-amino-acid chain; its full sequence is Small ribosomal subunit protein eS8 (133 aa).

Residues 1–22 (MGFYQGPDNRKITGGLKGKHRD) form a disordered region.

This sequence belongs to the eukaryotic ribosomal protein eS8 family. As to quaternary structure, part of the 30S ribosomal subunit.

The polypeptide is Small ribosomal subunit protein eS8 (Saccharolobus islandicus (strain M.14.25 / Kamchatka #1) (Sulfolobus islandicus)).